Consider the following 236-residue polypeptide: MAFTFKQFHIDDLNCGMPVSTDGVILGAWAPLAEAKNILDIGAGSGLLSLMAAQRSQGQITAVELEEKAAAACRYNMTQSPWAKRCQLVHGDIQHVCQLAQYQGYFDHIICNPPYFEHGPKASEQHRAMARHTETLGFTPLLDAISQCLSFEGYASLILPIQSLARFKACLNDTALFLVREVWVKSVENKAANRALLLLSKTEVEPYQRTDLTIRGEDGNYTEQMIELTKDFYLKL.

Belongs to the methyltransferase superfamily. tRNA (adenine-N(6)-)-methyltransferase family.

The protein resides in the cytoplasm. It carries out the reaction adenosine(37) in tRNA1(Val) + S-adenosyl-L-methionine = N(6)-methyladenosine(37) in tRNA1(Val) + S-adenosyl-L-homocysteine + H(+). Functionally, specifically methylates the adenine in position 37 of tRNA(1)(Val) (anticodon cmo5UAC). The sequence is that of tRNA1(Val) (adenine(37)-N6)-methyltransferase from Shewanella sp. (strain MR-7).